The primary structure comprises 420 residues: Acetyl-CoA acetyltransferase A, mitochondrial (420 aa).

The N-terminal 33 residues, 1–33, are a transit peptide targeting the mitochondrion; it reads MAFCGTRTAARLSHSTRALHNTHRNFASQRTLN. Catalysis depends on Cys119, which acts as the Acyl-thioester intermediate. Residues Tyr212, 251-253, and Lys256 each bind CoA; that span reads RVD. Tyr212 provides a ligand contact to K(+). K(+)-binding residues include Ala273 and Ala274. Ser277 is a CoA binding site. Val374 lines the K(+) pocket. Cys406 acts as the Proton donor/acceptor in catalysis.

Belongs to the thiolase-like superfamily. Thiolase family. In terms of assembly, homotetramer.

It localises to the mitochondrion. The catalysed reaction is 2 acetyl-CoA = acetoacetyl-CoA + CoA. It catalyses the reaction propanoyl-CoA + acetyl-CoA = 2-methyl-3-oxobutanoyl-CoA + CoA. The protein operates within lipid metabolism; fatty acid beta-oxidation. Its function is as follows. This is one of the enzymes that catalyzes the last step of the mitochondrial beta-oxidation pathway, an aerobic process breaking down fatty acids into acetyl-CoA. Using free coenzyme A/CoA, catalyzes the thiolytic cleavage of medium- to long-chain 3-oxoacyl-CoAs into acetyl-CoA and a fatty acyl-CoA shortened by two carbon atoms. The activity of the enzyme is reversible and it can also catalyze the condensation of two acetyl-CoA molecules into acetoacetyl-CoA. Thereby, it plays a major role in ketone body metabolism. The chain is Acetyl-CoA acetyltransferase A, mitochondrial (acat1-a) from Xenopus laevis (African clawed frog).